Consider the following 673-residue polypeptide: F420-dependent formate dehydrogenase subunit alpha (673 aa).

In terms of domain architecture, 4Fe-4S Mo/W bis-MGD-type spans phenylalanine 3–aspartate 59. 4 residues coordinate [4Fe-4S] cluster: cysteine 10, cysteine 13, cysteine 17, and cysteine 45. Selenocysteine 131 is a non-standard amino acid (selenocysteine).

It belongs to the prokaryotic molybdopterin-containing oxidoreductase family. As to quaternary structure, dimer of an alpha (FdhA) and a beta (FdhB) subunit. Requires [4Fe-4S] cluster as cofactor. Mo-bis(molybdopterin guanine dinucleotide) is required as a cofactor. The cofactor is Zn(2+).

It catalyses the reaction oxidized coenzyme F420-(gamma-L-Glu)(n) + formate + 2 H(+) = reduced coenzyme F420-(gamma-L-Glu)(n) + CO2. Catalyzes the oxidation of formate to carbon dioxide, with coenzyme F420 as the electron acceptor. The chain is F420-dependent formate dehydrogenase subunit alpha (fdhA) from Methanocaldococcus jannaschii (strain ATCC 43067 / DSM 2661 / JAL-1 / JCM 10045 / NBRC 100440) (Methanococcus jannaschii).